Reading from the N-terminus, the 364-residue chain is Putative galactoside 2-alpha-L-fucosyltransferase svh-11 (364 aa).

The Cytoplasmic segment spans residues 1 to 19 (MRLFHFLKFLTINNFSRYC). The chain crosses the membrane as a helical; Signal-anchor for type II membrane protein span at residues 20 to 42 (LKIVKVHIIWITIICIIYFNWRF). The Lumenal segment spans residues 43–364 (KKLDFMAIPY…SANSFTVVRS (322 aa)). N-linked (GlcNAc...) asparagine glycosylation is found at N60 and N128.

It belongs to the glycosyltransferase 11 family.

The protein resides in the golgi apparatus. It is found in the golgi stack membrane. Mediates the transfer of fucose to the terminal galactose on glycan chains of cell surface glycoproteins and glycolipids. Required for axon regeneration after injury. The polypeptide is Putative galactoside 2-alpha-L-fucosyltransferase svh-11 (Caenorhabditis elegans).